Here is a 231-residue protein sequence, read N- to C-terminus: Putative cobalt transport protein CbiM 2 (231 aa).

A run of 6 helical transmembrane segments spans residues 8–28 (LPIG…IYGI), 41–61 (VLPL…LKIP), 75–95 (LSAA…VLLF), 108–128 (LGAN…LVFV), 136–156 (VGIG…TYTV), and 176–196 (IAFA…EGII).

This sequence belongs to the CbiM family. As to quaternary structure, forms an energy-coupling factor (ECF) transporter complex composed of an ATP-binding protein (A component, CbiO), a transmembrane protein (T component, CbiQ) and 2 possible substrate-capture proteins (S components, CbiM and CbiN) of unknown stoichimetry.

Its subcellular location is the cell membrane. Its pathway is cofactor biosynthesis; adenosylcobalamin biosynthesis. Functionally, part of the energy-coupling factor (ECF) transporter complex CbiMNOQ involved in cobalt import. The chain is Putative cobalt transport protein CbiM 2 from Methanocorpusculum labreanum (strain ATCC 43576 / DSM 4855 / Z).